We begin with the raw amino-acid sequence, 67 residues long: Conotoxin Im3.1 (67 aa).

The signal sequence occupies residues 1 to 20; sequence MMSTLVVLLTICLLMLPLTA. The propeptide occupies 21-52; sequence RQLDADQLADQLAERMEDISADQNRWFDPVKR. Disulfide bonds link cysteine 53-cysteine 63, cysteine 54-cysteine 61, and cysteine 59-cysteine 64.

Belongs to the conotoxin M superfamily. In terms of tissue distribution, expressed by the venom duct.

The protein localises to the secreted. Its function is as follows. Probable neurotoxin. The sequence is that of Conotoxin Im3.1 from Conus imperialis (Imperial cone).